The sequence spans 573 residues: Potassium-transporting ATPase potassium-binding subunit (573 aa).

10 helical membrane passes run 6 to 26 (ILFA…GSYI), 66 to 86 (FFSL…ILLL), 135 to 155 (ALAV…IALI), 177 to 197 (VFWI…FQGV), 257 to 277 (IQMV…GKWV), 283 to 303 (GWLI…VMTI), 382 to 402 (IFGG…LAVF), 428 to 448 (MFAL…AAVI), 493 to 513 (ITIA…VIML), and 537 to 557 (FIFA…TIFP).

It belongs to the KdpA family. The system is composed of three essential subunits: KdpA, KdpB and KdpC.

Its subcellular location is the cell inner membrane. Part of the high-affinity ATP-driven potassium transport (or Kdp) system, which catalyzes the hydrolysis of ATP coupled with the electrogenic transport of potassium into the cytoplasm. This subunit binds the periplasmic potassium ions and delivers the ions to the membrane domain of KdpB through an intramembrane tunnel. The sequence is that of Potassium-transporting ATPase potassium-binding subunit from Francisella tularensis subsp. tularensis (strain WY96-3418).